We begin with the raw amino-acid sequence, 1543 residues long: ATP-binding cassette sub-family A member 10 (1543 aa).

7 consecutive transmembrane segments (helical) span residues 83–103, 135–155, 185–205, 210–230, 240–260, 264–284, and 310–330; these read YWLKGFVAFQAAINAAIIEVT, WFHFTCLVSFSSFIYFASLNV, ICFIFIMSIFMALVITSIPIV, FMVIFTLYSLYGLSLIALAFL, LAGLAGFLFTVFWGCLGFTVL, LPLSLGWVLSLLSPFAFTAGM, and IATFFILAFDTLFYLIFTLYF. The ABC transporter 1 domain maps to 391–626; sequence IRIRNVIKEY…WGIGYHLSLH (236 aa). 427 to 434 serves as a coordination point for ATP; sequence GHNGAGKS. The next 8 membrane-spanning stretches (helical) occupy residues 774 to 794, 890 to 910, 926 to 946, 985 to 1005, 1014 to 1034, 1046 to 1066, 1073 to 1093, and 1113 to 1133; these read LLCLLLVLGIAFIPIILEKIM, LNCFPVLMGIVSNALMGIFNF, IVLDLGFIDGSIFLLLITNCV, IPLYFLILFSIHLIYYFIFLG, FVLVVCIIGCAVSLIFLTYVL, GFWSFGFFIILICVSTIMVST, LILCMIFIPSFTLLGYVMLLI, and KTILLTTLIPYLQSVIFLFVI. Positions 1153–1164 are enriched in basic and acidic residues; it reads ISPRSRETHPNP. The disordered stretch occupies residues 1153–1177; sequence ISPRSRETHPNPEEPEEEDEDVQAE. Residues 1165 to 1174 show a composition bias toward acidic residues; sequence EEPEEEDEDV. Positions 1206–1440 constitute an ABC transporter 2 domain; that stretch reads YETKKSCFST…FGRDYLLEIK (235 aa). Residue 1239–1246 participates in ATP binding; that stretch reads GHNGAGKS.

The protein belongs to the ABC transporter superfamily. ABCA family. Widely expressed. Highly expressed in skeletal muscle, heart, brain and gastrointestinal tract.

Its subcellular location is the membrane. In terms of biological role, probable transporter which may play a role in macrophage lipid transport and homeostasis. In Homo sapiens (Human), this protein is ATP-binding cassette sub-family A member 10 (ABCA10).